We begin with the raw amino-acid sequence, 264 residues long: Phosphonoacetaldehyde hydrolase (264 aa).

D9 functions as the Nucleophile in the catalytic mechanism. Mg(2+) is bound by residues D9 and A11. The Schiff-base intermediate with substrate role is filled by K50. Residue D183 participates in Mg(2+) binding.

This sequence belongs to the HAD-like hydrolase superfamily. PhnX family. Homodimer. Mg(2+) serves as cofactor.

It carries out the reaction phosphonoacetaldehyde + H2O = acetaldehyde + phosphate + H(+). Involved in phosphonate degradation. This Bacillus cereus protein is Phosphonoacetaldehyde hydrolase (phnX).